A 244-amino-acid polypeptide reads, in one-letter code: Na(+)-translocating NADH-quinone reductase subunit E (244 aa).

Transmembrane regions (helical) follow at residues 11–31, 50–70, 90–110, 123–143, 153–173, and 191–211; these read LLGI…TFLG, MSVA…HYFI, FLEL…LEVL, GIFL…LFGI, VVFS…FATI, and ISFI…GIDI. A compositionally biased stretch (polar residues) spans 222 to 236; the sequence is VTNIATDSPQPNTHS. The tract at residues 222–244 is disordered; sequence VTNIATDSPQPNTHSSSEEPKAS.

It belongs to the NqrDE/RnfAE family. As to quaternary structure, composed of six subunits; NqrA, NqrB, NqrC, NqrD, NqrE and NqrF.

The protein localises to the cell inner membrane. The catalysed reaction is a ubiquinone + n Na(+)(in) + NADH + H(+) = a ubiquinol + n Na(+)(out) + NAD(+). In terms of biological role, NQR complex catalyzes the reduction of ubiquinone-1 to ubiquinol by two successive reactions, coupled with the transport of Na(+) ions from the cytoplasm to the periplasm. NqrA to NqrE are probably involved in the second step, the conversion of ubisemiquinone to ubiquinol. This Chlamydia trachomatis serovar A (strain ATCC VR-571B / DSM 19440 / HAR-13) protein is Na(+)-translocating NADH-quinone reductase subunit E.